The sequence spans 578 residues: Arginine--tRNA ligase (578 aa).

Residues 125–135 (PNVAKKMHVGH) carry the 'HIGH' region motif.

The protein belongs to the class-I aminoacyl-tRNA synthetase family. Monomer.

It localises to the cytoplasm. It catalyses the reaction tRNA(Arg) + L-arginine + ATP = L-arginyl-tRNA(Arg) + AMP + diphosphate. The chain is Arginine--tRNA ligase from Buchnera aphidicola subsp. Baizongia pistaciae (strain Bp).